Reading from the N-terminus, the 209-residue chain is Imidazole glycerol phosphate synthase subunit HisH (209 aa).

In terms of domain architecture, Glutamine amidotransferase type-1 spans 1–205 (MIAIIDYGMG…QGVVEAWKSS (205 aa)). Cys79 serves as the catalytic Nucleophile. Active-site residues include His180 and Glu182.

Heterodimer of HisH and HisF.

The protein localises to the cytoplasm. It carries out the reaction 5-[(5-phospho-1-deoxy-D-ribulos-1-ylimino)methylamino]-1-(5-phospho-beta-D-ribosyl)imidazole-4-carboxamide + L-glutamine = D-erythro-1-(imidazol-4-yl)glycerol 3-phosphate + 5-amino-1-(5-phospho-beta-D-ribosyl)imidazole-4-carboxamide + L-glutamate + H(+). The catalysed reaction is L-glutamine + H2O = L-glutamate + NH4(+). It functions in the pathway amino-acid biosynthesis; L-histidine biosynthesis; L-histidine from 5-phospho-alpha-D-ribose 1-diphosphate: step 5/9. IGPS catalyzes the conversion of PRFAR and glutamine to IGP, AICAR and glutamate. The HisH subunit catalyzes the hydrolysis of glutamine to glutamate and ammonia as part of the synthesis of IGP and AICAR. The resulting ammonia molecule is channeled to the active site of HisF. The sequence is that of Imidazole glycerol phosphate synthase subunit HisH from Bacillus cereus (strain ATCC 14579 / DSM 31 / CCUG 7414 / JCM 2152 / NBRC 15305 / NCIMB 9373 / NCTC 2599 / NRRL B-3711).